A 130-amino-acid polypeptide reads, in one-letter code: GYLYHPAYYYGAGASTQFKNQDAIGNYNFGYNEGHATGGTFRREFGDAFGNVKVGSYGLTDADGRRRIVTYKADASGFNANVHTNEPGTDSSKDPANTLVNKAVLPTTYYGGYYPGHYYGHYAPYHYGYY.

The Chitin-binding type R&amp;R domain maps to Ile-24–Asp-90.

This is Cuticle protein 14 isoform b from Limulus polyphemus (Atlantic horseshoe crab).